Reading from the N-terminus, the 436-residue chain is Drebrin-like protein (436 aa).

An ADF-H domain is found at Ala-2–Ala-133. Phosphothreonine is present on Thr-26. Position 160 is a phosphoserine (Ser-160). Lys-176 carries the post-translational modification N6-acetyllysine. Residues Asn-178–Gly-232 are a coiled coil. Composition is skewed to basic and acidic residues over residues Lys-185–Arg-229 and His-264–Ala-275. A disordered region spans residues Lys-185–Gln-371. Residues Met-276–Pro-286 show a composition bias toward polar residues. Phosphoserine is present on residues Ser-277, Ser-280, Ser-283, and Ser-291. Residue Lys-296 is modified to N6-acetyllysine. Thr-299 bears the Phosphothreonine mark. Ser-311 bears the Phosphoserine mark. Residues Tyr-340 and Tyr-350 each carry the phosphotyrosine modification. In terms of domain architecture, SH3 spans Gly-377–Glu-436.

The protein belongs to the ABP1 family. In terms of assembly, interacts with FGD1, MAP4K1 and PRAM1. Interacts with ANKRD54. Interacts with WASL and WIPF1. Interacts with SHANK2 and SHANK3. Interacts with both COBL and PACSIN1. Interacts with DNM1 and SYN1. In terms of tissue distribution, detected in brain (at protein level). Widely expressed in brain with highest levels in hippocampus and cerebral cortex. Located primarily in dendrites and, in moderate amounts, in cell bodies. Isoform 1 and isoform 3 are the predominant isoforms in brain.

Its subcellular location is the cytoplasm. It is found in the cytoskeleton. It localises to the cell projection. The protein resides in the lamellipodium. The protein localises to the ruffle. Its subcellular location is the cell cortex. It is found in the cytosol. It localises to the cell membrane. The protein resides in the synapse. The protein localises to the perikaryon. Its subcellular location is the neuron projection. It is found in the dendrite. It localises to the postsynaptic density. The protein resides in the golgi apparatus membrane. The protein localises to the cytoplasmic vesicle. Its subcellular location is the clathrin-coated vesicle membrane. It is found in the podosome. It localises to the early endosome. In terms of biological role, adapter protein that binds F-actin and DNM1, and thereby plays a role in receptor-mediated endocytosis. Required for the formation of organized podosome rosettes. May act as a common effector of antigen receptor-signaling pathways in leukocytes. Acts as a key component of the immunological synapse that regulates T-cell activation by bridging TCRs and the actin cytoskeleton to gene activation and endocytic processes. Plays a role in the reorganization of the actin cytoskeleton, formation of cell projections, such as neurites, in neuron morphogenesis and synapse formation via its interaction with WASL and COBL. Does not bind G-actin and promote actin polymerization by itself. This is Drebrin-like protein from Rattus norvegicus (Rat).